Consider the following 471-residue polypeptide: Pachytene checkpoint protein 2 homolog (471 aa).

213–220 (GPPGTGKT) is an ATP binding site.

Belongs to the AAA ATPase family. PCH2 subfamily.

Plays a key role in chromosome recombination during meiosis. This Oryza sativa subsp. indica (Rice) protein is Pachytene checkpoint protein 2 homolog.